The sequence spans 464 residues: CRISPR system endoribonuclease Csm6 (464 aa).

The segment at 1–190 is CARF domain; that stretch reads MEDLDALWER…LRILPNPHEA (190 aa). Residues 191 to 464 form an HEPN domain region; that stretch reads LAEVDALFAK…LSPEPVPLGF (274 aa).

Belongs to the CRISPR-associated Csm6 family. As to quaternary structure, homodimer. The protein forms a twisted, head-to-head dimer; the composite ssRNase active site is formed at the dimer interface. Requires Does not require a metal cofactor. as cofactor.

Its activity is regulated as follows. Non-specific ssRNase activity is allosterically activated about 1000-fold by cyclic tetraadenylate (cA4), which probably binds to its CARF domain. Functionally, CRISPR (clustered regularly interspaced short palindromic repeat) is an adaptive immune system that provides protection against mobile genetic elements (viruses, transposable elements and conjugative plasmids). CRISPR clusters contain spacers, sequences complementary to antecedent mobile elements, and target invading nucleic acids. CRISPR clusters are transcribed and processed into CRISPR RNA (crRNA). The type III-A Csm effector complex binds crRNA and acts as a crRNA-guided RNase, DNase and cyclic oligoadenylate synthase; binding of target RNA cognate to the crRNA is required for all activities. This protein is not part of the Csm effector complex. In terms of biological role, a single-strand-specific endoribonuclease (ssRNase) producing free 5'-OH. Activity is approximately 1000-fold stimulated by cyclic oligoadenylate (cOA); only cyclic tetraadenylate (cA4) stimulates the ssRNase activity while linear oligoadenylates do not activate the RNase. Another study showed stimulation by linear tetraadenylate at very high concentrations, but did not examine stimulation by cA4. The chain is CRISPR system endoribonuclease Csm6 from Thermus thermophilus (strain ATCC 27634 / DSM 579 / HB8).